The following is a 554-amino-acid chain: Protein NODULATION SIGNALING PATHWAY 1 (554 aa).

Residues 76-165 (TTSTTSLEPN…NSNNGNNKDG (90 aa)) are disordered. Polar residues predominate over residues 82–91 (LEPNSFNNIP). The segment covering 95–107 (LPKKRNAEDELSL) has biased composition (basic and acidic residues). The segment covering 150–162 (AKANGSNSNNGNN) has biased composition (low complexity). A GRAS domain is found at 159 to 548 (NGNNKDGRWA…QPVSFCSLWK (390 aa)). The tract at residues 166–227 (RWAEQLLNPC…HHLSSSSSST (62 aa)) is leucine repeat I (LRI). Residues 246–315 (LLKFYEFSPW…GGPPPLVRLT (70 aa)) form a VHIID region. The VHIID motif lies at 281 to 285 (LHILD). The tract at residues 331–373 (TPFSIGPCGDTFSSGLLGYAQSLNVNLQIKKLDNHPLQTLNAK) is leucine repeat II (LRII). The interval 383-468 (LIVCAQFRLH…RDSDERKMME (86 aa)) is PFYRE. An SAW region spans residues 471–548 (AAKALTNQRE…QPVSFCSLWK (78 aa)).

It belongs to the GRAS family. Expressed in epidermal and cortical root cells.

Its subcellular location is the nucleus. In terms of biological role, transcriptional regulator essential for Nod-factor-induced gene expression. Acts downstream of calcium spiking. May be a target of DMI3, a calcium/calmodulin-dependent protein kinase (CCaMK). Is essential for Nod factor-elicited expression of ERN1. Transcription factor involved in the control of strigolactone biosynthesis in roots through the activation of the beta-carotene isomerase D27, which participates in a pathway leading to biosynthesis of strigolactones. The sequence is that of Protein NODULATION SIGNALING PATHWAY 1 from Medicago truncatula (Barrel medic).